Reading from the N-terminus, the 95-residue chain is uncharacterized protein (95 aa).

Composition is skewed to basic and acidic residues over residues 1–28 and 41–53; these read MRRA…KERC and DERV…KGRP. The interval 1-73 is disordered; it reads MRRAEVKRSA…RTSRAGSSWQ (73 aa).

This is an uncharacterized protein from Homo sapiens (Human).